Consider the following 335-residue polypeptide: Methionine import ATP-binding protein MetN (335 aa).

Residues 2 to 241 (IEFQRLHKSY…PKHVTTRRFV (240 aa)) enclose the ABC transporter domain. 38–45 (GHSGAGKS) is a binding site for ATP.

It belongs to the ABC transporter superfamily. Methionine importer (TC 3.A.1.24) family. The complex is composed of two ATP-binding proteins (MetN), two transmembrane proteins (MetI) and a solute-binding protein (MetQ).

It localises to the cell inner membrane. It carries out the reaction L-methionine(out) + ATP + H2O = L-methionine(in) + ADP + phosphate + H(+). It catalyses the reaction D-methionine(out) + ATP + H2O = D-methionine(in) + ADP + phosphate + H(+). In terms of biological role, part of the ABC transporter complex MetNIQ involved in methionine import. Responsible for energy coupling to the transport system. The sequence is that of Methionine import ATP-binding protein MetN from Xanthomonas oryzae pv. oryzae (strain MAFF 311018).